Reading from the N-terminus, the 580-residue chain is Formate--tetrahydrofolate ligase (580 aa).

Position 83-90 (83-90 (TPMGEGKT)) interacts with ATP.

This sequence belongs to the formate--tetrahydrofolate ligase family.

The catalysed reaction is (6S)-5,6,7,8-tetrahydrofolate + formate + ATP = (6R)-10-formyltetrahydrofolate + ADP + phosphate. The protein operates within one-carbon metabolism; tetrahydrofolate interconversion. This is Formate--tetrahydrofolate ligase from Haloquadratum walsbyi (strain DSM 16790 / HBSQ001).